The following is a 260-amino-acid chain: tRNA (guanine-N(1)-)-methyltransferase (260 aa).

Residues Gly117 and 137–142 (LGDFVL) contribute to the S-adenosyl-L-methionine site.

It belongs to the RNA methyltransferase TrmD family. Homodimer.

It localises to the cytoplasm. It catalyses the reaction guanosine(37) in tRNA + S-adenosyl-L-methionine = N(1)-methylguanosine(37) in tRNA + S-adenosyl-L-homocysteine + H(+). Functionally, specifically methylates guanosine-37 in various tRNAs. The sequence is that of tRNA (guanine-N(1)-)-methyltransferase from Cupriavidus necator (strain ATCC 17699 / DSM 428 / KCTC 22496 / NCIMB 10442 / H16 / Stanier 337) (Ralstonia eutropha).